The sequence spans 146 residues: Ribosome maturation factor RimP (146 aa).

Belongs to the RimP family.

The protein resides in the cytoplasm. Its function is as follows. Required for maturation of 30S ribosomal subunits. In Helicobacter pylori (strain Shi470), this protein is Ribosome maturation factor RimP.